A 1313-amino-acid polypeptide reads, in one-letter code: Ataxin-2 (1313 aa).

The span at 1 to 12 shows a compositional bias: low complexity; that stretch reads MRSAAAAPRSPA. The disordered stretch occupies residues 1–255; the sequence is MRSAAAAPRS…RNSNKGLPQS (255 aa). A compositionally biased stretch (pro residues) spans 48–65; the sequence is GPYPSAAPPPPGPGPPPS. Composition is skewed to low complexity over residues 104–114, 141–154, 166–187, and 204–234; these read FVVLLLPLASP, ARPA…ACEP, QQQQ…QQQQ, and LLAS…VAAT. The segment covering 235 to 244 has biased composition (gly residues); it reads SGGGRPGLGR. Ser-248 is modified (phosphoserine). One can recognise a Sm domain in the interval 267 to 344; sequence RMVHILTSVV…FVVVQFKDMD (78 aa). Phosphoserine is present on residues Ser-393, Ser-466, Ser-478, Ser-508, and Ser-554. 2 stretches are compositionally biased toward basic and acidic residues: residues 459 to 471 and 478 to 492; these read ALEN…EEKY and SSER…RENK. 2 disordered regions span residues 459–954 and 1137–1219; these read ALEN…HQQP and NATL…NSFP. The span at 508–544 shows a compositional bias: polar residues; it reads SGRQNSPRMGQPGSGSMPSRSTSHTSDFNPNSGSDQR. Positions 552-562 are enriched in pro residues; sequence WPSPCPSPSSR. Residues 563–581 show a composition bias toward low complexity; sequence PPSRYQSGPNSLPPRAATP. Over residues 582 to 598 the composition is skewed to pro residues; the sequence is TRPPSRPPSRPSRPPSH. Position 624 is a phosphoserine (Ser-624). The span at 627 to 637 shows a compositional bias: basic residues; it reads AQRHPRNHRVS. The residue at position 640 (Arg-640) is an Asymmetric dimethylarginine; alternate. Arg-640 is subject to Omega-N-methylarginine; alternate. Ser-642 is subject to Phosphoserine. Residues 666-681 are compositionally biased toward low complexity; sequence TSPSGGTWSSVVSGVP. Position 684 is a phosphoserine (Ser-684). The span at 693 to 703 shows a compositional bias: polar residues; sequence PRQNSIGNTPS. The residue at position 728 (Ser-728) is a Phosphoserine. Thr-741 carries the phosphothreonine modification. Residues 768–777 show a composition bias toward polar residues; that stretch reads PNETSPSFSK. Phosphoserine is present on residues Ser-772 and Ser-784. The span at 788–804 shows a compositional bias: basic and acidic residues; it reads SEHRKQIDDLKKFKNDF. Residues 807–820 show a composition bias toward polar residues; sequence QPSSTSESMDQLLN. The segment covering 821–844 has biased composition (basic and acidic residues); sequence KNREGEKSRDLIKDKIEPSAKDSF. Over residues 847–871 the composition is skewed to low complexity; that stretch reads NSSSNCTSGSSKPNSPSISPSILSN. A phosphoserine mark is found at Ser-856, Ser-857, Ser-861, Ser-865, Ser-867, Ser-888, and Ser-889. Polar residues predominate over residues 880 to 891; that stretch reads VTSQGVQTSSPA. Lys-893 is covalently cross-linked (Glycyl lysine isopeptide (Lys-Gly) (interchain with G-Cter in SUMO2)). Basic and acidic residues predominate over residues 893–910; it reads KQEKDDKEEKKDAAEQVR. Composition is skewed to low complexity over residues 925–936 and 1155–1192; these read SFSQPKPSTTPT and GQQQ…QQSA. The segment covering 1206–1219 has biased composition (polar residues); sequence TPASNTQSPQNSFP.

It belongs to the ataxin-2 family. As to quaternary structure, monomer. Can also form homodimers. Interacts with TARDBP; the interaction is RNA-dependent. Interacts with RBFOX1. Interacts with polyribosomes. Interacts with SH3GL2 and SH3GL3. Interacts with SH3KBP1 and CBL. Interacts with EGFR. Interacts with ATXN2L. As to expression, expressed in the brain, heart, liver, skeletal muscle, pancreas and placenta. Isoform 1 is predominant in the brain and spinal cord. Isoform 4 is more abundant in the cerebellum. In the brain, broadly expressed in the amygdala, caudate nucleus, corpus callosum, hippocampus, hypothalamus, substantia nigra, subthalamic nucleus and thalamus.

It is found in the cytoplasm. Functionally, involved in EGFR trafficking, acting as negative regulator of endocytic EGFR internalization at the plasma membrane. The chain is Ataxin-2 (ATXN2) from Homo sapiens (Human).